Consider the following 131-residue polypeptide: Cystatin-like cysteine protease inhibitor EPIC3 (131 aa).

The N-terminal stretch at 1–20 (MAFTRSIALFAGLALAASSA) is a signal peptide. N-linked (GlcNAc...) asparagine glycosylation is present at Asn33. Positions 71-75 (QTVAG) match the Secondary area of contact motif.

This sequence belongs to the cystatin family.

It is found in the secreted. Functionally, secreted effector that interacts with and inhibits host apoplastic pathogenesis-related papain-like cysteine proteases. Inhibition of host proteases by a pathogen extracellular protease inhibitor forms a specific type of defense-counterdefense mechanism between plants and microbial pathogens. The sequence is that of Cystatin-like cysteine protease inhibitor EPIC3 from Phytophthora infestans (Potato late blight agent).